Consider the following 207-residue polypeptide: LPS-assembly lipoprotein LptE (207 aa).

Positions 1 to 19 (MRHRILTLLLGLAVLVTAG) are cleaved as a signal peptide. The N-palmitoyl cysteine moiety is linked to residue Cys20. Cys20 carries the S-diacylglycerol cysteine lipid modification. Residues 168–207 (KNTQKNGDKPVSDANAAQGSTPTAVNETTLGEPAVSTSAK) are disordered. Positions 182 to 207 (NAAQGSTPTAVNETTLGEPAVSTSAK) are enriched in polar residues.

Belongs to the LptE lipoprotein family. In terms of assembly, component of the lipopolysaccharide transport and assembly complex. Interacts with LptD.

Its subcellular location is the cell outer membrane. In terms of biological role, together with LptD, is involved in the assembly of lipopolysaccharide (LPS) at the surface of the outer membrane. Required for the proper assembly of LptD. Binds LPS and may serve as the LPS recognition site at the outer membrane. This Yersinia pseudotuberculosis serotype O:1b (strain IP 31758) protein is LPS-assembly lipoprotein LptE.